Here is a 1381-residue protein sequence, read N- to C-terminus: DNA-directed RNA polymerase subunit beta (1381 aa).

The protein belongs to the RNA polymerase beta chain family. As to quaternary structure, the RNAP catalytic core consists of 2 alpha, 1 beta, 1 beta' and 1 omega subunit. When a sigma factor is associated with the core the holoenzyme is formed, which can initiate transcription.

It carries out the reaction RNA(n) + a ribonucleoside 5'-triphosphate = RNA(n+1) + diphosphate. DNA-dependent RNA polymerase catalyzes the transcription of DNA into RNA using the four ribonucleoside triphosphates as substrates. In Sulfurimonas denitrificans (strain ATCC 33889 / DSM 1251) (Thiomicrospira denitrificans (strain ATCC 33889 / DSM 1251)), this protein is DNA-directed RNA polymerase subunit beta.